Consider the following 464-residue polypeptide: mRNA capping enzyme LEF-4 (464 aa).

Residues 1–204 (MDYGDFVIEK…NVMCNIIADM (204 aa)) are mRNA triphosphatase. Positions 205–464 (EALTDAQNIS…KHRRDRIVPN (260 aa)) are mRNA guanylyltransferase. The active-site N6-GMP-lysine intermediate is K255.

Belongs to the baculoviridae LEF-4 family. In terms of assembly, interacts with LEF-8, LEF-9, and p47.

It localises to the host cytoplasm. It is found in the host nucleus. The catalysed reaction is a 5'-end diphospho-ribonucleoside in mRNA + GTP + H(+) = a 5'-end (5'-triphosphoguanosine)-ribonucleoside in mRNA + diphosphate. The enzyme catalyses a 5'-end triphospho-ribonucleoside in mRNA + H2O = a 5'-end diphospho-ribonucleoside in mRNA + phosphate + H(+). Functionally, component of the viral DNA-dependent RNA polymerase that catalyzes two reactions involved in viral RNA cap formation: an RNA 5'-triphosphatase that hydrolyzes the gamma phosphate of triphosphate-terminated RNA and a guanylyltransferase that reacts with GTP to form a covalent protein-guanylate adduct. Therefore plays an essential role in late and very late gene expression. The chain is mRNA capping enzyme LEF-4 (LEF-4) from Autographa californica nuclear polyhedrosis virus (AcMNPV).